A 240-amino-acid chain; its full sequence is Putative exosome complex component RRP41 (240 aa).

The protein belongs to the RNase PH family. As to quaternary structure, component of the RNA exosome complex.

Its subcellular location is the cytoplasm. The protein resides in the nucleus. The protein localises to the nucleolus. It localises to the nucleoplasm. Non-catalytic component of the RNA exosome complex which has 3'-&gt;5' exoribonuclease activity and participates in a multitude of cellular RNA processing and degradation events. The polypeptide is Putative exosome complex component RRP41 (exos-4.1) (Caenorhabditis briggsae).